We begin with the raw amino-acid sequence, 351 residues long: DNA polymerase IV (351 aa).

In terms of domain architecture, UmuC spans 4-185; sequence IIHVDMDCFF…LPLAKIPGVG (182 aa). 2 residues coordinate Mg(2+): D8 and D103. E104 is a catalytic residue.

Belongs to the DNA polymerase type-Y family. In terms of assembly, monomer. It depends on Mg(2+) as a cofactor.

It is found in the cytoplasm. It catalyses the reaction DNA(n) + a 2'-deoxyribonucleoside 5'-triphosphate = DNA(n+1) + diphosphate. Poorly processive, error-prone DNA polymerase involved in untargeted mutagenesis. Copies undamaged DNA at stalled replication forks, which arise in vivo from mismatched or misaligned primer ends. These misaligned primers can be extended by PolIV. Exhibits no 3'-5' exonuclease (proofreading) activity. May be involved in translesional synthesis, in conjunction with the beta clamp from PolIII. The sequence is that of DNA polymerase IV from Escherichia coli O9:H4 (strain HS).